Consider the following 243-residue polypeptide: Ornithine decarboxylase antizyme 3 (243 aa).

Phosphoserine occurs at positions 6, 9, and 12.

The protein belongs to the ODC antizyme family. As to quaternary structure, interacts with ODC1 and thereby sterically blocks ODC homodimerization. Interacts with AZIN2; this interaction disrupts the interaction between the antizyme and ODC1. Interacts with GGN. Isoform 2 interacts with PPP1R16A; Modulates PPP1CB activity. Testis-specific. Isoform 2 is expressed in outer dense fibers, fibrous sheath and the connecting piece of sperm.

The protein localises to the nucleus. It localises to the cytoplasm. The protein resides in the cell projection. Its subcellular location is the cilium. It is found in the flagellum. In terms of biological role, ornithine decarboxylase (ODC) antizyme protein that negatively regulates ODC activity and intracellular polyamine biosynthesis and uptake in response to increased intracellular polyamine levels. Binds to ODC monomers, inhibiting the assembly of the functional ODC homodimers. Does not target the ODC monomers for degradation, which allows a protein synthesis-independent restoration of ODC activity. Stabilizes AZIN2 by interfering with its ubiquitination. Involved in the translocation of AZNI2 from ER-Golgi intermediate compartment (ERGIC) to the cytosol. Probably plays a key role in spermatogenesis by regulating the intracellular concentration of polyamines in haploid germ cells. Its function is as follows. Does not possess antizyme activity. Modulates PPP1CB activity through its interaction with PPP1R16A. This chain is Ornithine decarboxylase antizyme 3, found in Rattus norvegicus (Rat).